A 93-amino-acid polypeptide reads, in one-letter code: Small ribosomal subunit protein uS19 (93 aa).

It belongs to the universal ribosomal protein uS19 family.

Protein S19 forms a complex with S13 that binds strongly to the 16S ribosomal RNA. The sequence is that of Small ribosomal subunit protein uS19 from Helicobacter pylori (strain G27).